The following is a 394-amino-acid chain: Elongation factor Tu (394 aa).

The region spanning lysine 10–lysine 204 is the tr-type G domain. Residues glycine 19 to threonine 26 are G1. Position 19–26 (glycine 19–threonine 26) interacts with GTP. Threonine 26 is a Mg(2+) binding site. The G2 stretch occupies residues glycine 60–asparagine 64. Residues aspartate 81–glycine 84 form a G3 region. GTP contacts are provided by residues aspartate 81–histidine 85 and asparagine 136–aspartate 139. Residues asparagine 136–aspartate 139 are G4. The interval serine 174 to leucine 176 is G5.

This sequence belongs to the TRAFAC class translation factor GTPase superfamily. Classic translation factor GTPase family. EF-Tu/EF-1A subfamily. As to quaternary structure, monomer.

It is found in the cytoplasm. It carries out the reaction GTP + H2O = GDP + phosphate + H(+). GTP hydrolase that promotes the GTP-dependent binding of aminoacyl-tRNA to the A-site of ribosomes during protein biosynthesis. The chain is Elongation factor Tu from Buchnera aphidicola subsp. Baizongia pistaciae (strain Bp).